Consider the following 376-residue polypeptide: Chaperone protein DnaJ (376 aa).

The 66-residue stretch at 5 to 70 (DYYEVLGVKK…QKRAAYDQYG (66 aa)) folds into the J domain. A CR-type zinc finger spans residues 131-209 (GVTKEIRIPT…CHGHGRVEKS (79 aa)). Residues C144, C147, C161, C164, C183, C186, C197, and C200 each contribute to the Zn(2+) site. CXXCXGXG motif repeat units lie at residues 144-151 (CDVCHGSG), 161-168 (CSTCRGAG), 183-190 (CPTCHGSG), and 197-204 (CNKCHGHG).

The protein belongs to the DnaJ family. In terms of assembly, homodimer. Zn(2+) is required as a cofactor.

The protein localises to the cytoplasm. Functionally, participates actively in the response to hyperosmotic and heat shock by preventing the aggregation of stress-denatured proteins and by disaggregating proteins, also in an autonomous, DnaK-independent fashion. Unfolded proteins bind initially to DnaJ; upon interaction with the DnaJ-bound protein, DnaK hydrolyzes its bound ATP, resulting in the formation of a stable complex. GrpE releases ADP from DnaK; ATP binding to DnaK triggers the release of the substrate protein, thus completing the reaction cycle. Several rounds of ATP-dependent interactions between DnaJ, DnaK and GrpE are required for fully efficient folding. Also involved, together with DnaK and GrpE, in the DNA replication of plasmids through activation of initiation proteins. This is Chaperone protein DnaJ from Yersinia enterocolitica serotype O:8 / biotype 1B (strain NCTC 13174 / 8081).